Reading from the N-terminus, the 389-residue chain is G2/M cell-cycle inhibitor DR6 (389 aa).

The protein belongs to the Roseolovirus DR6 family.

The protein localises to the host nucleus. In terms of biological role, inhibits the host G2/M cell-cycle progression in a p53-independent manner. This chain is G2/M cell-cycle inhibitor DR6 (DR6L), found in Homo sapiens (Human).